The following is a 395-amino-acid chain: Phosphoglycerate kinase (395 aa).

Substrate-binding positions include 21 to 23, Arg36, 59 to 62, Arg120, and Arg153; these read DFN and HLGR. ATP contacts are provided by residues Lys203, Gly294, Glu325, and 351 to 354; that span reads GGDS.

This sequence belongs to the phosphoglycerate kinase family. As to quaternary structure, monomer.

It localises to the cytoplasm. The enzyme catalyses (2R)-3-phosphoglycerate + ATP = (2R)-3-phospho-glyceroyl phosphate + ADP. It participates in carbohydrate degradation; glycolysis; pyruvate from D-glyceraldehyde 3-phosphate: step 2/5. This chain is Phosphoglycerate kinase, found in Finegoldia magna (strain ATCC 29328 / DSM 20472 / WAL 2508) (Peptostreptococcus magnus).